Here is a 117-residue protein sequence, read N- to C-terminus: UPF0344 protein GK0697 (117 aa).

4 helical membrane-spanning segments follow: residues 1–21 (MTHAHITSWLITIVLFFLAVS), 39–59 (LFYILTIVTGLLLLHSIASIS), 60–80 (ALYWLKALAGLWVIGAMEMVL), and 97–117 (VIALAVTLFLGLLLPLGFDLF).

It belongs to the UPF0344 family.

Its subcellular location is the cell membrane. This is UPF0344 protein GK0697 from Geobacillus kaustophilus (strain HTA426).